A 432-amino-acid chain; its full sequence is Methylenetetrahydrofolate--tRNA-(uracil-5-)-methyltransferase TrmFO (432 aa).

7–12 (GAGLAG) lines the FAD pocket.

This sequence belongs to the MnmG family. TrmFO subfamily. It depends on FAD as a cofactor.

It localises to the cytoplasm. It catalyses the reaction uridine(54) in tRNA + (6R)-5,10-methylene-5,6,7,8-tetrahydrofolate + NADH + H(+) = 5-methyluridine(54) in tRNA + (6S)-5,6,7,8-tetrahydrofolate + NAD(+). It carries out the reaction uridine(54) in tRNA + (6R)-5,10-methylene-5,6,7,8-tetrahydrofolate + NADPH + H(+) = 5-methyluridine(54) in tRNA + (6S)-5,6,7,8-tetrahydrofolate + NADP(+). Catalyzes the folate-dependent formation of 5-methyl-uridine at position 54 (M-5-U54) in all tRNAs. This is Methylenetetrahydrofolate--tRNA-(uracil-5-)-methyltransferase TrmFO from Anoxybacillus flavithermus (strain DSM 21510 / WK1).